We begin with the raw amino-acid sequence, 146 residues long: Large ribosomal subunit protein uL15 (146 aa).

Residues 1–13 show a composition bias toward basic and acidic residues; that stretch reads MKLHELKPAEGSR. The disordered stretch occupies residues 1 to 57; sequence MKLHELKPAEGSRKVRNRVGRGTSSGNGKTSGRGQKGQKARSGVGLRPGFEGGQTPL. The segment covering 23 to 35 has biased composition (gly residues); sequence TSSGNGKTSGRGQ.

This sequence belongs to the universal ribosomal protein uL15 family. Part of the 50S ribosomal subunit.

Binds to the 23S rRNA. The chain is Large ribosomal subunit protein uL15 from Streptococcus thermophilus (strain CNRZ 1066).